Here is a 1416-residue protein sequence, read N- to C-terminus: DNA-directed RNA polymerase subunit beta' (1416 aa).

Positions 71, 73, 86, and 89 each coordinate Zn(2+). 3 residues coordinate Mg(2+): aspartate 461, aspartate 463, and aspartate 465. Zn(2+) contacts are provided by cysteine 815, cysteine 889, cysteine 896, and cysteine 899.

The protein belongs to the RNA polymerase beta' chain family. The RNAP catalytic core consists of 2 alpha, 1 beta, 1 beta' and 1 omega subunit. When a sigma factor is associated with the core the holoenzyme is formed, which can initiate transcription. It depends on Mg(2+) as a cofactor. Zn(2+) serves as cofactor.

It catalyses the reaction RNA(n) + a ribonucleoside 5'-triphosphate = RNA(n+1) + diphosphate. In terms of biological role, DNA-dependent RNA polymerase catalyzes the transcription of DNA into RNA using the four ribonucleoside triphosphates as substrates. In Haemophilus influenzae (strain PittEE), this protein is DNA-directed RNA polymerase subunit beta'.